We begin with the raw amino-acid sequence, 793 residues long: Sucrose synthase (793 aa).

A GT-B glycosyltransferase region spans residues 259-738; it reads MILNIAIISP…AIKRVTEKYS (480 aa).

It belongs to the glycosyltransferase 1 family. Homotetramer.

The enzyme catalyses an NDP-alpha-D-glucose + D-fructose = a ribonucleoside 5'-diphosphate + sucrose + H(+). In terms of biological role, catalyzes the reversible conversion of sucrose and a nucleotide disphosphate (NDP) into fructose and NDP-glucose; although the reaction is freely reversible in vitro, the physiological reaction seems to be sucrose cleavage. Unlike characterized plant enzymes prefers ADP as a cosubstrate, whereas plants prefer UDP. Its preference for ADP over UDP suggests it may directly link sucrose and glycogen metabolism. The sequence is that of Sucrose synthase from Melioribacter roseus (strain JCM 17771 / P3M-2).